A 280-amino-acid chain; its full sequence is MRSPLQSCSASEGRAVEAALSVDHAGGRSVLRRQNVGYPLHVTRGFHLDAARPDLLTLYLQSASGGLYAGDRIALDVSVARDAAFHLTTQAATVVHDGRGIGALQRQTITVDSGAFCAITTDPYVLFPGAELALDTVATVADDAVLCVADGFAVHDPRASGRAFSEFSGRLRVLRPDGHLLLHDAGRVSGDELHGALGPFAAAANLIIVAPPDRLPSVKSLQQAADGCGALAGASRAPNDAGLVLRILAPDGGTLSRATDAAFHVAAAAALGVTLSRRRK.

It belongs to the UreD family. In terms of assembly, ureD, UreF and UreG form a complex that acts as a GTP-hydrolysis-dependent molecular chaperone, activating the urease apoprotein by helping to assemble the nickel containing metallocenter of UreC. The UreE protein probably delivers the nickel.

It is found in the cytoplasm. Required for maturation of urease via the functional incorporation of the urease nickel metallocenter. The sequence is that of Urease accessory protein UreD 3 from Bradyrhizobium sp. (strain ORS 278).